Reading from the N-terminus, the 155-residue chain is cAMP-dependent protein kinase type II-alpha regulatory subunit (155 aa).

Positions 1 to 34 are disordered; the sequence is SGSQDLEPSSGLVTDAIADSESEDDEDLDVPIPS. The segment at 1–81 is dimerization and phosphorylation; it reads SGSQDLEPSS…LQEACKDILL (81 aa). Positions 18–29 are enriched in acidic residues; the sequence is ADSESEDDEDLD. Phosphoserine occurs at positions 20 and 22. The residue at position 41 (serine 41) is a Phosphoserine; by PKA. Residues 82 to 155 and glutamate 150 contribute to the 3',5'-cyclic AMP site; that span reads FKNL…ALMY.

This sequence belongs to the cAMP-dependent kinase regulatory chain family. In terms of assembly, the inactive form of the enzyme is composed of two regulatory chains and two catalytic chains. Activation by cAMP produces two active catalytic monomers and a regulatory dimer that binds four cAMP molecules. Interacts with AKAP4 and CBFA2T3. Interacts with the phosphorylated form of PJA2. Interacts with MYRIP; this interaction may link PKA to components of the exocytosis machinery, thus facilitating exocytosis, including insulin release. Forms a complex composed of PRKAR2A, GSK3B and GSKIP through GSKIP interaction; facilitates PKA-induced phosphorylation and regulates GSK3B activity. Interacts with ADCY8; inhibits adenylate cyclase activity through PKA phosphorylation. In terms of processing, phosphorylated by the activated catalytic chain. In terms of tissue distribution, four types of regulatory chains are found: I-alpha, I-beta, II-alpha, and II-beta. Their expression varies among tissues and is in some cases constitutive and in others inducible.

The protein localises to the cytoplasm. It localises to the cell membrane. Regulatory subunit of the cAMP-dependent protein kinases involved in cAMP signaling in cells. Type II regulatory chains mediate membrane association by binding to anchoring proteins, including the MAP2 kinase. This Sus scrofa (Pig) protein is cAMP-dependent protein kinase type II-alpha regulatory subunit (PRKAR2A).